The chain runs to 206 residues: Homoserine/homoserine lactone efflux protein (206 aa).

Transmembrane regions (helical) follow at residues 5 to 25 (WWFA…SGAI), 45 to 65 (GLQT…GTLF), 68 to 88 (SVIA…WLGI), 117 to 137 (FVNL…PQFI), 148 to 168 (IVLG…YATL), and 182 to 202 (MKAL…LLAS).

This sequence belongs to the Rht family.

The protein localises to the cell membrane. In terms of biological role, conducts the efflux of homoserine and homoserine lactone. The chain is Homoserine/homoserine lactone efflux protein (rhtB) from Escherichia coli O157:H7.